The chain runs to 566 residues: Glutamate--tRNA ligase (566 aa).

The 'HIGH' region signature appears at 105–115 (PNPDGPIHLGN).

The protein belongs to the class-I aminoacyl-tRNA synthetase family. Glutamate--tRNA ligase type 2 subfamily.

The protein resides in the cytoplasm. The enzyme catalyses tRNA(Glu) + L-glutamate + ATP = L-glutamyl-tRNA(Glu) + AMP + diphosphate. Catalyzes the attachment of glutamate to tRNA(Glu) in a two-step reaction: glutamate is first activated by ATP to form Glu-AMP and then transferred to the acceptor end of tRNA(Glu). In Sulfurisphaera tokodaii (strain DSM 16993 / JCM 10545 / NBRC 100140 / 7) (Sulfolobus tokodaii), this protein is Glutamate--tRNA ligase.